Reading from the N-terminus, the 650-residue chain is DNA mismatch repair protein MutL (650 aa).

2 disordered regions span residues 358 to 392 (EASQ…QPLV) and 408 to 448 (QPRP…QSAA). Residues 367-384 (TPQPRPALTPGHPDPPPQ) are compositionally biased toward pro residues. The span at 430–444 (PYAPIAAAPVPASEP) shows a compositional bias: low complexity.

Belongs to the DNA mismatch repair MutL/HexB family.

Functionally, this protein is involved in the repair of mismatches in DNA. It is required for dam-dependent methyl-directed DNA mismatch repair. May act as a 'molecular matchmaker', a protein that promotes the formation of a stable complex between two or more DNA-binding proteins in an ATP-dependent manner without itself being part of a final effector complex. This Geobacter sp. (strain M21) protein is DNA mismatch repair protein MutL.